Reading from the N-terminus, the 100-residue chain is ATP-dependent Clp protease adapter protein ClpS (100 aa).

This sequence belongs to the ClpS family. As to quaternary structure, binds to the N-terminal domain of the chaperone ClpA.

Functionally, involved in the modulation of the specificity of the ClpAP-mediated ATP-dependent protein degradation. The polypeptide is ATP-dependent Clp protease adapter protein ClpS (Corynebacterium glutamicum (strain R)).